A 427-amino-acid chain; its full sequence is MKDVSISSLENMKLKELYELARHYKISYYSKLTKKELIFAILKANAEQEDLLFMEGVLEIIQSEGFGFLRPINYSPSSEDIYISASQIRRFDLRNGDKVSGKVRPPKENERYYGLLHVEAVNGDDPESAKERVHFPALTPLYPDRQMVLETKPNFLSTRIMDMMAPVGFGQRGLIVAPPKAGKTMLLKEIANSITANQPEAELIVLLIDERPEEVTDIERSVAGDVVSSTFDEVPENHIKVAELVLERAMRLVEHKKDVIILMDSITRLARAYNLVIPPSGRTLSGGIDPAAFHRPKRFFGAARNIEEGGSLTILATALVDTGSRMDDVIYEEFKGTGNMELHLDRSLAERRIFPAIDIRRSGTRKEELLVPKEHLDRLWSIRKTMSDSPDFAEKFMRKMKKTKTNQEFFDILNQEWKQANLSSARR.

The Rho RNA-BD domain occupies 51-125; it reads LLFMEGVLEI…LHVEAVNGDD (75 aa). ATP contacts are provided by residues 168 to 173, 180 to 185, and Arg-211; these read GFGQRG and KAGKTM.

The protein belongs to the Rho family. In terms of assembly, homohexamer. The homohexamer assembles into an open ring structure.

Facilitates transcription termination by a mechanism that involves Rho binding to the nascent RNA, activation of Rho's RNA-dependent ATPase activity, and release of the mRNA from the DNA template. In Bacillus subtilis (strain 168), this protein is Transcription termination factor Rho.